The following is a 945-amino-acid chain: Glutamyl aminopeptidase (945 aa).

At M1–H18 the chain is on the cytoplasmic side. Residues V19–L39 traverse the membrane as a helical; Signal-anchor for type II membrane protein segment. Residues T40–P945 lie on the Extracellular side of the membrane. The tract at residues C43–S77 is disordered. Residues N116 and N189 are each glycosylated (N-linked (GlcNAc...) asparagine). E215 contributes to the substrate binding site. An N-linked (GlcNAc...) asparagine glycan is attached at N316. G349–N353 lines the substrate pocket. Position 385 (H385) interacts with Zn(2+). E386 acts as the Proton acceptor in catalysis. Residues H389 and E408 each coordinate Zn(2+). Residues N546, N601, N637, N669, N754, and N792 are each glycosylated (N-linked (GlcNAc...) asparagine). R878 contributes to the substrate binding site.

This sequence belongs to the peptidase M1 family. In terms of assembly, homodimer; disulfide-linked. It depends on Zn(2+) as a cofactor. In terms of tissue distribution, early B-lineage cells and certain stromal cell of hemopoietic tissues. Also expressed by capillary endothelial cells, placenta, and epithelial cells of the intestine and proximal renal tubules.

The protein resides in the cell membrane. The enzyme catalyses Release of N-terminal glutamate (and to a lesser extent aspartate) from a peptide.. Its activity is regulated as follows. Substrate specificity is modulated by calcium which enhances the enzymatic activity for cleavage of acidic residues while reducing its activity with basic residues. Inhibited by aminopeptidase inhibitors amastatin and bestatin. Functionally, regulates central hypertension through its calcium-modulated preference to cleave N-terminal acidic residues from peptides such as angiotensin II. The chain is Glutamyl aminopeptidase (Enpep) from Mus musculus (Mouse).